A 260-amino-acid chain; its full sequence is Indole-3-glycerol phosphate synthase (260 aa).

Belongs to the TrpC family.

It carries out the reaction 1-(2-carboxyphenylamino)-1-deoxy-D-ribulose 5-phosphate + H(+) = (1S,2R)-1-C-(indol-3-yl)glycerol 3-phosphate + CO2 + H2O. The protein operates within amino-acid biosynthesis; L-tryptophan biosynthesis; L-tryptophan from chorismate: step 4/5. The sequence is that of Indole-3-glycerol phosphate synthase from Staphylococcus haemolyticus (strain JCSC1435).